The primary structure comprises 315 residues: Calumenin (315 aa).

A signal peptide spans 1–19; the sequence is MNKRPLLLCLGLWVACTLS. 6 EF-hand domains span residues 68 to 103, 104 to 139, 151 to 186, 188 to 223, 229 to 264, and 265 to 300; these read ESKE…AQKK, YVYD…TYLD, QMMI…EEFD, MKDI…HDGD, WVKT…SDYD, and HSEA…FVGS. Ca(2+)-binding residues include D81, D83, D85, Y87, E92, D117, S119, D121, and E128. A glycan (N-linked (GlcNAc...) asparagine) is linked at N131. 18 residues coordinate Ca(2+): D164, D166, D168, E175, D201, N203, D205, E212, D242, N244, D246, K248, E253, D278, N280, D282, K284, and E289. The Prevents secretion from ER motif lies at 312-315; sequence HDEF.

Belongs to the CREC family. As to quaternary structure, interacts with ggcx.

It localises to the endoplasmic reticulum membrane. Its subcellular location is the golgi apparatus. The protein localises to the secreted. The protein resides in the melanosome. It is found in the sarcoplasmic reticulum lumen. Functionally, involved in regulation of vitamin K-dependent carboxylation of multiple N-terminal glutamate residues. Seems to inhibit gamma-carboxylase ggcx. Binds 7 calcium ions with a low affinity. This Xenopus laevis (African clawed frog) protein is Calumenin (calu).